Reading from the N-terminus, the 330-residue chain is MMKTVFFGTPDFAVPTLEALLGHPDIDVLAVVSQPDRRRGRGSKLIPSPVKEVAVQAGIPVWQPERVKRCQETLAKLKNCQADFFVVVAYGQLLSPEILVMPRLGCVNVHGSLLPKYRGAAPLQWAIANGETETGVTTMLMDEGMDTGAMLLKTTTPIGLMDNLTAIGDRLARSGAELLVQTLKDLDAGQLQPIPQTETEATYAPLLKKGDFVINWHRSALEIHNQVRGFAPACHTAWGEQILKIISTVPLGAEFFPLLPEKYQDLATAYLNYSLEAGEPGNIIGTIKNWGPVLETGNGHLLLEQVQPPGKKPQSGWDFINGNRSTISFA.

(6S)-5,6,7,8-tetrahydrofolate is bound at residue 112-115 (SLLP).

It belongs to the Fmt family.

It catalyses the reaction L-methionyl-tRNA(fMet) + (6R)-10-formyltetrahydrofolate = N-formyl-L-methionyl-tRNA(fMet) + (6S)-5,6,7,8-tetrahydrofolate + H(+). Its function is as follows. Attaches a formyl group to the free amino group of methionyl-tRNA(fMet). The formyl group appears to play a dual role in the initiator identity of N-formylmethionyl-tRNA by promoting its recognition by IF2 and preventing the misappropriation of this tRNA by the elongation apparatus. In Synechocystis sp. (strain ATCC 27184 / PCC 6803 / Kazusa), this protein is Methionyl-tRNA formyltransferase.